Reading from the N-terminus, the 1506-residue chain is MAYSWQTEPNRTEPQEDGSDTQQFHHTNQHLSSRQVRLGFDQLVEEINNKTPLSESEKEEDTYFVPDAPNLGSKWPSIYETHPRYFSEFTSQSPDSSQLRFGKLSAIGFNPAVLPTHQLIHEGASWRNPSGKYHGIEYPRFDALPPSSTGQGECNPQGQSGTKHHNYCGEHEGNLPHHHSSYSIDSIPNREKRRSGDVNLVEPSLEFSKDSFLPRTSENVSVESTEPIGCPIEIVEVPQGSNKNLASFCNKVKKIRESYHASDINSNSGKIWAITTAYPSRLFADTKFRVKISIDNSAQLLLLMPHANYLVKDLIAEILLLCANEPLSPKEYLLSVCGSEEFLQMDHSLGSHKIFQKNKSVIQLHLQKNRDTPGKLSRKSEDDHSPFHLNQLLEFTHIWKISRQCLSTVMKKYNLHVEHLLKPQKDMEEKHLSSMVSGNQHTSQPHVNNVLEEVKNICSVLGCIETKQVSDAVKELNLILQRPSQNFHQNSETSKKGFIERVTAELSRSIYQLIDVYCSSFCTDFQPVHTPGGVSHVHAGLQSHLSFTVCSLHNVPETWAHSYKAFSFSCWLTYAGKKLCQVKSCRPLPVTKSFSLLVNWNEIINFPLEIKSLPRESMLVIKLFGIDSATHSTNLLAWTCLPLFPRQESVLGSRLFSVTLQSEPPIEMIAPGVWDGSQPSPLTLQIDFPDAGWEYLKPESEENRTDHEEPPRECLKHIAKLSQKKSPLLLSEEKRRYLWFYRLYCNNENSSLPLVLGSAPGWDEETVSEMHAILRRWTFSHPWEALGLLTSRFPDQDIREVAVQQLDTLLTDELLDCLPQLVQAVKFEWNLESPLVELLPRRPLQSIRVAHCLYWLLRDAQGEAYFKSWYQELLAALQFCAGEALNEELSKEQKLVKLLGDIGEKVKSASDPQRKDVLKKEIGSLEEFFKDIKTCHLPLNPALCIKGIDRDACSYFTSNASPLKITFINANPMGKNISVIFKAGDDLRQDMLALQIIQVMDNAWLQEGLDMQMITYGCLSTGRAQGFIEMVPDAVTLAKIHLHSGLIGPLKENTIKKWFSQHNHLKEDYEKALRNFFYSCAGWCVVTFILGVCDRHNDNIMLTKSGHMFHIDFGKFLGHAQTFGGIKRDRAPFIFTSEMEYFITEGGKNIQHFQDFVELCCRAYNIVRKHSQLILSLLEMMLHAGLPELRGIEDLKYVHNNLRPQDTDLEATSHFTKKIKESLECFPVKLNNLIHTLAQMPALSLAKPAPQTLLQESCILNKTRTIQRVTILGFSKTHSNLYLMEVTCSDNRRSLTKKSFEQFYRLHSQMQKQFSSLALPEFPHWWHLPFTDSDHKRIRDLSHYVEQVLRGSYEVANSDCVLSFFLSEHIQPTLEDSPFVDPGENSLDKSPKVQLLMTYEDSRLTILVKHLKNIHLPDGSVPSAHVEIYLLPHPSEVRRKKTKCVPKCTDPTYNEIVVYDEVLGLQGHVLMLIVKSKTVFVGAVNIQLCSVPLNEEKWYPLGNSII.

A disordered region spans residues 1 to 34 (MAYSWQTEPNRTEPQEDGSDTQQFHHTNQHLSSR). Polar residues predominate over residues 20-34 (DTQQFHHTNQHLSSR). In terms of domain architecture, PI3K-RBD spans 285 to 371 (DTKFRVKISI…IQLHLQKNRD (87 aa)). The C2 PI3K-type domain occupies 541–689 (LQSHLSFTVC…SPLTLQIDFP (149 aa)). The 177-residue stretch at 704–880 (RTDHEEPPRE…QELLAALQFC (177 aa)) folds into the PIK helical domain. The region spanning 949-1227 (DRDACSYFTS…KIKESLECFP (279 aa)) is the PI3K/PI4K catalytic domain. Positions 955–961 (YFTSNAS) are G-loop. Residues 1091-1099 (GVCDRHNDN) are catalytic loop. Residues 1110–1136 (HIDFGKFLGHAQTFGGIKRDRAPFIFT) are activation loop. The region spanning 1260 to 1372 (LNKTRTIQRV…SFFLSEHIQP (113 aa)) is the PX domain. The C2 domain maps to 1381–1506 (DPGENSLDKS…KWYPLGNSII (126 aa)).

This sequence belongs to the PI3/PI4-kinase family. As to expression, expressed predominantly in liver. Also found in kidney, lung and lymphoid tissue. Down-regulated in BeF3 cells expressing the BCR-ABL oncogene p185.

The protein resides in the membrane. The catalysed reaction is a 1,2-diacyl-sn-glycero-3-phospho-(1D-myo-inositol 4-phosphate) + ATP = a 1,2-diacyl-sn-glycero-3-phospho-(1D-myo-inositol-3,4-bisphosphate) + ADP + H(+). It carries out the reaction a 1,2-diacyl-sn-glycero-3-phospho-(1D-myo-inositol) + ATP = a 1,2-diacyl-sn-glycero-3-phospho-(1D-myo-inositol-3-phosphate) + ADP + H(+). Generates phosphatidylinositol 3-phosphate (PtdIns3P) and phosphatidylinositol 3,4-bisphosphate (PtdIns(3,4)P2) that act as second messengers. May play a role in SDF1A-stimulated chemotaxis. The polypeptide is Phosphatidylinositol 3-kinase C2 domain-containing subunit gamma (Pik3c2g) (Mus musculus (Mouse)).